A 216-amino-acid polypeptide reads, in one-letter code: DNA gyrase subunit B (216 aa).

Residues 140–216 (SELYLVEGDS…PDKLRYHKII (77 aa)) enclose the Toprim domain.

It belongs to the type II topoisomerase GyrB family. As to quaternary structure, heterotetramer, composed of two GyrA and two GyrB chains. In the heterotetramer, GyrA contains the active site tyrosine that forms a transient covalent intermediate with DNA, while GyrB binds cofactors and catalyzes ATP hydrolysis.

The protein localises to the cytoplasm. It catalyses the reaction ATP-dependent breakage, passage and rejoining of double-stranded DNA.. Functionally, a type II topoisomerase that negatively supercoils closed circular double-stranded (ds) DNA in an ATP-dependent manner to modulate DNA topology and maintain chromosomes in an underwound state. Negative supercoiling favors strand separation, and DNA replication, transcription, recombination and repair, all of which involve strand separation. Also able to catalyze the interconversion of other topological isomers of dsDNA rings, including catenanes and knotted rings. Type II topoisomerases break and join 2 DNA strands simultaneously in an ATP-dependent manner. The polypeptide is DNA gyrase subunit B (gyrB) (Acinetobacter bereziniae (Acinetobacter genomosp. 10)).